A 562-amino-acid chain; its full sequence is F-box only protein 33 (562 aa).

In terms of domain architecture, F-box spans 68–114 (AAGAASLPSELIVHIFSFLPAPDRLRASASCSHWRECLFYPALWPQL). A compositionally biased stretch (gly residues) spans 155–173 (GGGPGDGGSGGGTDTGTGG). Positions 155-176 (GGGPGDGGSGGGTDTGTGGEDG) are disordered.

In terms of assembly, part of the SCF (SKP1-CUL1-F-box) E3 ubiquitin-protein ligase complex SCF(FBXO33) formed of CUL1, SKP1, RBX1 and FBXO33. Interacts via its N-terminus with YBX1 CSD domain. Directly interacts with SKP1 and CUL1.

It functions in the pathway protein modification; protein ubiquitination. Substrate recognition component of a SCF (SKP1-CUL1-F-box protein) E3 ubiquitin-protein ligase complex which mediates the ubiquitination and subsequent proteasomal degradation of target proteins. Probably recognizes and binds to phosphorylated target proteins. Recognizes YBX1. This is F-box only protein 33 (Fbxo33) from Mus musculus (Mouse).